We begin with the raw amino-acid sequence, 426 residues long: Histone-binding protein RBBP7 (426 aa).

7 WD repeats span residues 47–123, 129–174, 182–218, 229–270, 276–313, 319–370, and 377–404; these read QWLP…KINH, RARY…LRLR, GLSWNPNLSGNLLSASDDHTICLWDISGAPKEGKIVD, VVED…HSVD, VNCLSFNPYSEFILATGSADKTVALWDLRNLKLKLHSF, EIFQ…LFIH, and ISDFSWNPNEPWVICSVSEDNIMQVWQM.

The protein belongs to the WD repeat RBAP46/RBAP48/MSI1 family. As to quaternary structure, binds directly to helix 1 of the histone fold of histone H4, a region that is not accessible when H4 is in chromatin.

The protein localises to the nucleus. Its function is as follows. Core histone-binding subunit that may target chromatin remodeling factors, histone acetyltransferases and histone deacetylases to their histone substrates in a manner that is regulated by nucleosomal DNA. Component of several complexes which regulate chromatin metabolism. This is Histone-binding protein RBBP7 (rbbp7) from Danio rerio (Zebrafish).